We begin with the raw amino-acid sequence, 78 residues long: Small ribosomal subunit protein uS17 (78 aa).

This sequence belongs to the universal ribosomal protein uS17 family. Part of the 30S ribosomal subunit.

In terms of biological role, one of the primary rRNA binding proteins, it binds specifically to the 5'-end of 16S ribosomal RNA. The protein is Small ribosomal subunit protein uS17 of Allorhizobium ampelinum (strain ATCC BAA-846 / DSM 112012 / S4) (Agrobacterium vitis (strain S4)).